Here is a 643-residue protein sequence, read N- to C-terminus: Pescadillo homolog (643 aa).

A compositionally biased stretch (basic and acidic residues) spans 305-323 (EKTKEKNHKSDNNPHEHTT). The disordered stretch occupies residues 305 to 329 (EKTKEKNHKSDNNPHEHTTNIDNNN). One can recognise a BRCT domain in the interval 378–474 (KLKELFKNHI…NILPCSDYLT (97 aa)). Positions 531-615 (NYKEEEEEEN…IVLSKKKRKL (85 aa)) form a coiled coil.

This sequence belongs to the pescadillo family. Interacts with dual specificity protein phosphatase YVH1.

The protein resides in the nucleus. It localises to the nucleolus. The protein localises to the nucleoplasm. Required for maturation of ribosomal RNAs and formation of the large ribosomal subunit. The sequence is that of Pescadillo homolog from Plasmodium falciparum (isolate 3D7).